A 196-amino-acid chain; its full sequence is Nucleoid occlusion factor SlmA (196 aa).

The HTH tetR-type domain maps to 7 to 68; that stretch reads INRREEILQA…GLIEFIEESL (62 aa). Positions 31–50 form a DNA-binding region, H-T-H motif; it reads TTAKLAKQVGVSEAALYRHF. A coiled-coil region spans residues 110–139; that stretch reads HALMFENERLRDRINQLFERIETSLRQILR.

Belongs to the nucleoid occlusion factor SlmA family. Homodimer. Interacts with FtsZ.

Its subcellular location is the cytoplasm. It is found in the nucleoid. Required for nucleoid occlusion (NO) phenomenon, which prevents Z-ring formation and cell division over the nucleoid. Acts as a DNA-associated cell division inhibitor that binds simultaneously chromosomal DNA and FtsZ, and disrupts the assembly of FtsZ polymers. SlmA-DNA-binding sequences (SBS) are dispersed on non-Ter regions of the chromosome, preventing FtsZ polymerization at these regions. This is Nucleoid occlusion factor SlmA from Vibrio cholerae serotype O1 (strain ATCC 39315 / El Tor Inaba N16961).